Here is a 213-residue protein sequence, read N- to C-terminus: MKSLQALFGGTFDPVHYGHLKPVETLANLIGLTRVTIIPNNVPPHRPQPEANSMQRKHMLELAIADKPLFTLDERELKRNAPSYTAQTLKEWRQEQGPDVPLAFIIGQDSLLTFPTWYEYETILDNAHLIVCRRPGYPLEMAQPQYQQWLEDHLTHNPEDLHLQPAGKIYLAETPWFNISATIIRERLQNGESCEDLLPEPVLTYINQQGLYR.

It belongs to the NadD family.

The enzyme catalyses nicotinate beta-D-ribonucleotide + ATP + H(+) = deamido-NAD(+) + diphosphate. Its pathway is cofactor biosynthesis; NAD(+) biosynthesis; deamido-NAD(+) from nicotinate D-ribonucleotide: step 1/1. Its function is as follows. Catalyzes the reversible adenylation of nicotinate mononucleotide (NaMN) to nicotinic acid adenine dinucleotide (NaAD). The chain is Probable nicotinate-nucleotide adenylyltransferase from Escherichia coli O45:K1 (strain S88 / ExPEC).